We begin with the raw amino-acid sequence, 214 residues long: uncharacterized protein (214 aa).

Transmembrane regions (helical) follow at residues 33-53, 104-124, 132-152, 153-173, and 186-206; these read VILFVSLVFILSLVLLYILVV, ILGIFSLFVIAVNSYILSYVL, FIYLVLPHGIIEIPALILSAS, GGVLFNMGLVNFLINIKFGTK, and LLILSIILFIVAGIVEGTITF.

It is found in the cell membrane. This is an uncharacterized protein from Methanocaldococcus jannaschii (strain ATCC 43067 / DSM 2661 / JAL-1 / JCM 10045 / NBRC 100440) (Methanococcus jannaschii).